Reading from the N-terminus, the 316-residue chain is 33 kDa chaperonin (316 aa).

Disulfide bonds link cysteine 239–cysteine 241 and cysteine 272–cysteine 275.

It belongs to the HSP33 family. In terms of processing, under oxidizing conditions two disulfide bonds are formed involving the reactive cysteines. Under reducing conditions zinc is bound to the reactive cysteines and the protein is inactive.

The protein resides in the cytoplasm. Functionally, redox regulated molecular chaperone. Protects both thermally unfolding and oxidatively damaged proteins from irreversible aggregation. Plays an important role in the bacterial defense system toward oxidative stress. In Clostridium perfringens (strain SM101 / Type A), this protein is 33 kDa chaperonin.